The sequence spans 332 residues: UDP-N-acetylenolpyruvoylglucosamine reductase (332 aa).

Positions 15–184 (IDVSAACFLE…TYVSFRLSKR (170 aa)) constitute an FAD-binding PCMH-type domain. Arg160 is an active-site residue. The active-site Proton donor is the Ser232. Glu328 is an active-site residue.

This sequence belongs to the MurB family. Requires FAD as cofactor.

The protein resides in the cytoplasm. The enzyme catalyses UDP-N-acetyl-alpha-D-muramate + NADP(+) = UDP-N-acetyl-3-O-(1-carboxyvinyl)-alpha-D-glucosamine + NADPH + H(+). It functions in the pathway cell wall biogenesis; peptidoglycan biosynthesis. Cell wall formation. This chain is UDP-N-acetylenolpyruvoylglucosamine reductase, found in Bacteroides fragilis (strain YCH46).